Consider the following 123-residue polypeptide: Protein lgg-1 (123 aa).

Residue Gly116 is the site of Phosphatidylethanolamine amidated glycine attachment. A propeptide spans 117 to 123 (removed in mature form); sequence GEVEKKE.

It belongs to the ATG8 family. In terms of assembly, interacts with sepa-1 (via the LIR motifs); the interaction is direct. Interacts with allo-1 (via the LIR motif). Interacts with sqst-1 (via the LIR motifs); the interaction is direct. Both lipidated and unlipidated forms interact with epg-7 (via the LIR motif); the interaction is direct. Interacts with epg-2 (via the LIR motifs); the interaction is direct. Interacts with atg-13; the interaction is direct. Interacts with unc-51 (via the LIR motif); the interaction is direct. Interacts with atg-7; the interaction is direct. Interacts with atg-3. The interaction with atg-7 and atg-3 may be required for the lipidation of lgg-1. Post-translationally, cleaved by atg-4.1 and/or atg-4.2, after Gly-116 to form a thioester bond with 'Cys-523' of atg-7 (E1-like activating enzyme) before being transferred to 'Cys-255' of atg-3 (E2 conjugating enzyme), in order to be amidated with phosphatidylethanolamine. This lipid modification anchors lgg-1 to membranes and can be reversed by atg-4.2, releasing soluble lgg-1. C-terminal cleavage is essential for autophagosome initiation and biogenesis. Lipidation is not essential for autophagy or development but the lipidated form is involved in cargo recognition and autophagosome biogenesis. Lipidation regulates lgg-2-positive autophagosome formation. Expressed in PLML touch receptor neuron and in the ventral nerve cord. Expressed in AIY interneurons.

It is found in the preautophagosomal structure. The protein localises to the cytoplasmic vesicle. It localises to the autophagosome. The protein resides in the autophagosome membrane. Its subcellular location is the lysosome lumen. It is found in the mitochondrion. The protein localises to the cytoplasm. It localises to the phagosome membrane. The protein resides in the cell membrane. Its subcellular location is the cell projection. It is found in the dendrite. The protein localises to the perikaryon. Its function is as follows. Ubiquitin-like modifier involved in the formation of autophagosomal vacuoles (autophagosomes). When lipidated mediates tethering between adjacent membranes and stimulates membrane fusion during autophagy. Recruits lipidated-lgg-2 to maturing autophagosomes. Acts in the aggrephagy pathway, which is the macroautophagic degradation of ubiquitinated protein aggregates, and preferentially interacts with autophagy proteins and substrates containing LIR motifs to mediate autophagosome formation and protein aggregate degradation. In particular, binds to components of the unc-51-atg-13 complex to regulate autophagosome formation and cargo sequestration. Required for the degradation of specific sepa-1- and sqst-1-containing protein aggregates during embryogenesis. Involved in allophagy, which is an autophagic process in which paternal mitochondria and organelles are degraded during fertilization, and moreover is required for the formation of lgg-2-positive allophagic autophagosomes in embryos. Involved in the clearance of apoptotic cells by promoting the delivery of engulfed apoptotic cells to the lysosome. Plays a role in the distribution and clearance of germ cell specific P-granules from somatic cells. Also plays a role in the autophagy-mediated degradation of ribosomal RNA and ribosomal proteins in lysosomes. Involved in xenophagy, the autophagy-mediated degradation of pathogens and pathogen products, such as toxins. Required for normal survival when exposed to pathogenic bacteria S.typhimurium probably by promoting autophagic degradation of intracellular S.typhimurium. Also plays a role in membrane-pore repair. Plays a role in mitophagy. Essential for dauer development and longevity, including longevity in response to moderate, short-term heat shock, also known as a hormetic heat shock. The protein is Protein lgg-1 of Caenorhabditis elegans.